The chain runs to 391 residues: Processive diacylglycerol beta-glucosyltransferase (391 aa).

The protein belongs to the glycosyltransferase 28 family. UgtP subfamily.

The protein localises to the cell membrane. It catalyses the reaction a 1,2-diacyl-3-O-(beta-D-glucopyranosyl)-sn-glycerol + UDP-alpha-D-glucose = a 1,2-diacyl-3-O-(beta-D-Glc-(1-&gt;6)-beta-D-Glc)-sn-glycerol + UDP + H(+). The enzyme catalyses a 1,2-diacyl-sn-glycerol + UDP-alpha-D-glucose = a 1,2-diacyl-3-O-(beta-D-glucopyranosyl)-sn-glycerol + UDP + H(+). It participates in glycolipid metabolism; diglucosyl-diacylglycerol biosynthesis. Its function is as follows. Processive glucosyltransferase involved in the biosynthesis of both the bilayer- and non-bilayer-forming membrane glucolipids. Is able to successively transfer two glucosyl residues to diacylglycerol (DAG), thereby catalyzing the formation of beta-monoglucosyl-DAG (3-O-(beta-D-glucopyranosyl)-1,2-diacyl-sn-glycerol) and beta-diglucosyl-DAG (3-O-(beta-D-glucopyranosyl-beta-(1-&gt;6)-D-glucopyranosyl)-1,2-diacyl-sn-glycerol). Beta-diglucosyl-DAG is the predominant glycolipid found in Bacillales and is also used as a membrane anchor for lipoteichoic acid (LTA). This is Processive diacylglycerol beta-glucosyltransferase from Staphylococcus epidermidis (strain ATCC 35984 / DSM 28319 / BCRC 17069 / CCUG 31568 / BM 3577 / RP62A).